A 90-amino-acid polypeptide reads, in one-letter code: Phosphocarrier protein HPr (90 aa).

The region spanning 1 to 89 is the HPr domain; sequence MPALEITIIN…ELINNRFDEG (89 aa). Histidine 15 (pros-phosphohistidine intermediate) is an active-site residue.

The protein belongs to the HPr family.

It is found in the cytoplasm. Its function is as follows. General (non sugar-specific) component of the phosphoenolpyruvate-dependent sugar phosphotransferase system (sugar PTS). This major carbohydrate active-transport system catalyzes the phosphorylation of incoming sugar substrates concomitantly with their translocation across the cell membrane. The phosphoryl group from phosphoenolpyruvate (PEP) is transferred to the phosphoryl carrier protein HPr by enzyme I. Phospho-HPr then transfers it to the PTS EIIA domain. This is Phosphocarrier protein HPr (ptsH) from Pseudomonas aeruginosa (strain ATCC 15692 / DSM 22644 / CIP 104116 / JCM 14847 / LMG 12228 / 1C / PRS 101 / PAO1).